We begin with the raw amino-acid sequence, 245 residues long: SPX domain-containing protein 3 (245 aa).

The region spanning 1–142 (MKFGKRIKEQ…RGGLRSPFIQ (142 aa)) is the SPX domain.

In terms of biological role, plays a positive role in plant adaptation to phosphate starvation and exerts negative feedback regulation of SPX1. This Arabidopsis thaliana (Mouse-ear cress) protein is SPX domain-containing protein 3 (SPX3).